Here is a 587-residue protein sequence, read N- to C-terminus: Proteasome-associated ATPase (587 aa).

A coiled-coil region spans residues Ala-9–Pro-94. An ATP-binding site is contributed by Gly-276 to Leu-281. The docks into pockets in the proteasome alpha-ring stretch occupies residues Tyr-586–Leu-587.

Belongs to the AAA ATPase family. Homohexamer. Assembles into a hexameric ring structure that caps the 20S proteasome core. Strongly interacts with the prokaryotic ubiquitin-like protein Pup through a hydrophobic interface; the interacting region of ARC lies in its N-terminal coiled-coil domain. There is one Pup binding site per ARC hexamer ring. Upon ATP-binding, the C-terminus of ARC interacts with the alpha-rings of the proteasome core, possibly by binding to the intersubunit pockets.

It functions in the pathway protein degradation; proteasomal Pup-dependent pathway. In terms of biological role, ATPase which is responsible for recognizing, binding, unfolding and translocation of pupylated proteins into the bacterial 20S proteasome core particle. May be essential for opening the gate of the 20S proteasome via an interaction with its C-terminus, thereby allowing substrate entry and access to the site of proteolysis. Thus, the C-termini of the proteasomal ATPase may function like a 'key in a lock' to induce gate opening and therefore regulate proteolysis. This is Proteasome-associated ATPase from Thermomonospora curvata (strain ATCC 19995 / DSM 43183 / JCM 3096 / KCTC 9072 / NBRC 15933 / NCIMB 10081 / Henssen B9).